The chain runs to 244 residues: 2,5-diamino-6-ribosylamino-4(3H)-pyrimidinone 5'-phosphate reductase (244 aa).

NADP(+) contacts are provided by residues Thr74, Asp78, Ile160, and 183–187; that span reads GSHVI.

It belongs to the HTP reductase family. In terms of assembly, homodimer.

The enzyme catalyses 2,5-diamino-6-(1-D-ribitylamino)pyrimidin-4(3H)-one 5'-phosphate + NADP(+) = 2,5-diamino-6-(1-D-ribosylamino)pyrimidin-4(3H)-one 5'-phosphate + NADPH + H(+). It carries out the reaction 2,5-diamino-6-(1-D-ribitylamino)pyrimidin-4(3H)-one 5'-phosphate + NAD(+) = 2,5-diamino-6-(1-D-ribosylamino)pyrimidin-4(3H)-one 5'-phosphate + NADH + H(+). It functions in the pathway cofactor biosynthesis; riboflavin biosynthesis. Functionally, catalyzes an early step in riboflavin biosynthesis, the NADPH-dependent reduction of the ribose side chain of 2,5-diamino-6-ribosylamino-4(3H)-pyrimidinone 5'-phosphate, yielding 2,5-diamino-6-ribitylamino-4(3H)-pyrimidinone 5'-phosphate. This is 2,5-diamino-6-ribosylamino-4(3H)-pyrimidinone 5'-phosphate reductase (RIB7) from Candida glabrata (strain ATCC 2001 / BCRC 20586 / JCM 3761 / NBRC 0622 / NRRL Y-65 / CBS 138) (Yeast).